The chain runs to 565 residues: Probable peptidoglycan D,D-transpeptidase PbpC (565 aa).

A helical transmembrane segment spans residues 10–30; that stretch reads FILVVTLFVLASLAVSGRLVY. Ser289 serves as the catalytic Acyl-ester intermediate.

Belongs to the transpeptidase family. FtsI subfamily.

Its subcellular location is the cell inner membrane. The catalysed reaction is Preferential cleavage: (Ac)2-L-Lys-D-Ala-|-D-Ala. Also transpeptidation of peptidyl-alanyl moieties that are N-acyl substituents of D-alanine.. The protein operates within cell wall biogenesis; peptidoglycan biosynthesis. Its function is as follows. Catalyzes cross-linking of the peptidoglycan cell wall at the division septum. Binds penicillin. This is Probable peptidoglycan D,D-transpeptidase PbpC from Pseudomonas aeruginosa (strain ATCC 15692 / DSM 22644 / CIP 104116 / JCM 14847 / LMG 12228 / 1C / PRS 101 / PAO1).